The primary structure comprises 475 residues: MVSKNTTDKKKNQSIGKVIQVLGSVVDVKFSENSIPKIYDALIVDNNGKKLVLEVEQNIGDEIVRTIAMGPTEGLKRGLDVINTNSPITAPTGMEVLGRMFNVLGDPIDEKPDLDVKREPIHKDAPKYEELVTTTEILETGIKVIDLMIPFTKGGKVGLFGGAGVGKTILIQELINNIAKAHNGVSVFAGVGERTREGNDLYHEFIEAGVLNKTCLVFGQMNEPPGARMRVALTGLTIAEYFRDQKNMDVLLFIDNIFRFTQAGSEVSALLGRMPSAVGYQPTLSTEMGSLQERITSTKNGSITSVQAVYVPADDLTDPAPATTFTHLDARIVLDRSIASLGIYPAVDPLASSSRVLDPEIVGQEHYDIALRVQIALQKYQDLQSIIAILGMDELSEEDKLIVQRARKIRNFLSQSFFVGEKFTGRPGVFVKVNDTVRSFKSILDGEVDYIPETYFLYSSIIDDVIEKYNKDKDK.

161 to 168 (GGAGVGKT) contacts ATP.

It belongs to the ATPase alpha/beta chains family. F-type ATPases have 2 components, CF(1) - the catalytic core - and CF(0) - the membrane proton channel. CF(1) has five subunits: alpha(3), beta(3), gamma(1), delta(1), epsilon(1). CF(0) has three main subunits: a(1), b(2) and c(9-12). The alpha and beta chains form an alternating ring which encloses part of the gamma chain. CF(1) is attached to CF(0) by a central stalk formed by the gamma and epsilon chains, while a peripheral stalk is formed by the delta and b chains.

It is found in the cell membrane. It carries out the reaction ATP + H2O + 4 H(+)(in) = ADP + phosphate + 5 H(+)(out). Functionally, produces ATP from ADP in the presence of a proton gradient across the membrane. The catalytic sites are hosted primarily by the beta subunits. This Mycoplasma mycoides subsp. mycoides SC (strain CCUG 32753 / NCTC 10114 / PG1) protein is ATP synthase subunit beta.